A 101-amino-acid chain; its full sequence is Protein SPIRAL1-like 3 (101 aa).

Residues 1–22 are compositionally biased toward gly residues; that stretch reads MGRGVSSGGGQSSLGYLFGGGE. Disordered stretches follow at residues 1 to 54 and 73 to 101; these read MGRG…GIQS and TDRPSTKVQAAPGGGSSLDYLFSGNKDGK.

It belongs to the SPIRAL1 family.

Its function is as follows. Acts in maintaining the cortical microtubules organization essential for anisotropic cell growth. This chain is Protein SPIRAL1-like 3, found in Oryza sativa subsp. japonica (Rice).